The following is a 206-amino-acid chain: Thymidylate kinase (206 aa).

11-18 is an ATP binding site; that stretch reads GIDGAGKT.

This sequence belongs to the thymidylate kinase family.

It carries out the reaction dTMP + ATP = dTDP + ADP. Its function is as follows. Phosphorylation of dTMP to form dTDP in both de novo and salvage pathways of dTTP synthesis. This chain is Thymidylate kinase, found in Burkholderia lata (strain ATCC 17760 / DSM 23089 / LMG 22485 / NCIMB 9086 / R18194 / 383).